The following is a 29-amino-acid chain: Potassium-transporting ATPase KdpF subunit (29 aa).

A helical membrane pass occupies residues 2–22 (LIGEAVLAVVTVAVVAYLTYV).

The protein belongs to the KdpF family. The system is composed of three essential subunits: KdpA, KdpB and KdpC. The complex also contains KdpF, a small non-essential subunit.

It localises to the cell membrane. Part of the high-affinity ATP-driven potassium transport (or Kdp) system, which catalyzes the hydrolysis of ATP coupled with the electrogenic transport of potassium into the cytoplasm. This subunit may be involved in stabilization of the complex. The Kdp system is essential for growth under K(+) limitation, and for survival under desiccation and salt crystal inclusion. This chain is Potassium-transporting ATPase KdpF subunit, found in Halobacterium salinarum (strain ATCC 29341 / DSM 671 / R1).